The primary structure comprises 211 residues: LexA repressor (211 aa).

Residues 27–47 (QTEIARAFGFKGVRAVQHHLD) constitute a DNA-binding region (H-T-H motif). Residues serine 131 and lysine 168 each act as for autocatalytic cleavage activity in the active site.

The protein belongs to the peptidase S24 family. Homodimer.

It carries out the reaction Hydrolysis of Ala-|-Gly bond in repressor LexA.. Its function is as follows. Represses a number of genes involved in the response to DNA damage (SOS response), including recA and lexA. In the presence of single-stranded DNA, RecA interacts with LexA causing an autocatalytic cleavage which disrupts the DNA-binding part of LexA, leading to derepression of the SOS regulon and eventually DNA repair. This is LexA repressor from Xylella fastidiosa (strain M23).